The sequence spans 239 residues: Transcriptional regulatory protein BtsR (239 aa).

Positions 3–116 (KVLIVDDEPL…RLEKTLARLR (114 aa)) constitute a Response regulatory domain. Residue Asp-54 is modified to 4-aspartylphosphate. The region spanning 137–239 (IPCTGHSRIY…LKSLKEAIGL (103 aa)) is the HTH LytTR-type domain.

In terms of processing, phosphorylated by BtsS.

Member of the two-component regulatory system BtsS/BtsR. BtsR regulates expression of btsT by binding to its promoter region. This Shigella flexneri protein is Transcriptional regulatory protein BtsR.